The sequence spans 556 residues: Endoplasmic reticulum membrane protein 65 (556 aa).

Residues Met-1–Phe-87 lie on the Cytoplasmic side of the membrane. Ser-22 is modified (phosphoserine). A helical membrane pass occupies residues Met-88 to Ile-108. The Lumenal segment spans residues Arg-109–Arg-151. A helical membrane pass occupies residues Cys-152–Leu-172. Residues Tyr-173 to Leu-224 lie on the Cytoplasmic side of the membrane. The helical transmembrane segment at Leu-225 to Ile-245 threads the bilayer. Topologically, residues Ser-246 to Leu-330 are lumenal. A glycan (N-linked (GlcNAc...) asparagine) is linked at Asn-318. Residues Ser-331–Val-351 form a helical membrane-spanning segment. Over Asp-352–Arg-391 the chain is Cytoplasmic. A helical transmembrane segment spans residues Leu-392 to Phe-412. Residues Lys-413 to Phe-428 are Lumenal-facing. Residues Met-429–Ile-449 form a helical membrane-spanning segment. Residues Lys-450 to Trp-556 are Cytoplasmic-facing.

This sequence belongs to the TAPT1 family. Interacts with SLP1.

The protein localises to the endoplasmic reticulum membrane. It localises to the mitochondrion. Functionally, may be involved in membrane protein folding. This chain is Endoplasmic reticulum membrane protein 65, found in Saccharomyces cerevisiae (strain ATCC 204508 / S288c) (Baker's yeast).